Reading from the N-terminus, the 370-residue chain is Actin-related protein 2/3 complex subunit 1A (370 aa).

WD repeat units lie at residues 6–45, 50–89, 140–179, 202–241, 244–284, and 322–365; these read FLLEPITCHAWNRDRTQIALSPNNHEVHIYKKNGSQWVKA, EHNGHITGIDWAPKSDRIVTCGADRNAYVWSQKDGVWKPT, PIRSTVLSLDWHPNNVLLAAGSCDFKCRVFSAYIKEVDEK, GTGGWVHGVSFSASGSRLAWVSHDSTVSVADASKSVQVST, TEFL…TFVS, and LHQN…SSIQ.

It belongs to the WD repeat ARPC1 family. As to quaternary structure, probable component of the Arp2/3 complex in which it may replace ARPC1B. In addition to its role in the cytoplasmic cytoskeleton, the Arp2/3 complex also promotes actin polymerization in the nucleus, thereby regulating gene transcription and repair of damaged DNA.

Its subcellular location is the cytoplasm. The protein localises to the cytoskeleton. The protein resides in the nucleus. Its function is as follows. Probably functions as a component of the Arp2/3 complex which is involved in regulation of actin polymerization and together with an activating nucleation-promoting factor (NPF) mediates the formation of branched actin networks. In Homo sapiens (Human), this protein is Actin-related protein 2/3 complex subunit 1A (ARPC1A).